The chain runs to 735 residues: Rho GTPase-activating protein SYDE1 (735 aa).

The tract at residues 1-253 (MAEPLLRKTF…SPTSFRPYEV (253 aa)) is disordered. Positions 14–31 (RGREKLPRKKSDAKERGH) are enriched in basic and acidic residues. Residues 35–46 (RPEPSPPEPEPQ) are compositionally biased toward pro residues. A compositionally biased stretch (low complexity) spans 47-71 (APEGSQAGAEGPSSPEASRSPARGA). Pro residues predominate over residues 122–131 (PPAPEPPGPQ). A compositionally biased stretch (gly residues) spans 211 to 221 (GGPGPAAGPGG). 4 positions are modified to phosphoserine: Ser224, Ser231, Ser235, and Ser244. The 118-residue stretch at 249–366 (RPYEVGPAAR…FRGCQAQQLA (118 aa)) folds into the C2 domain. The Rho-GAP domain occupies 398 to 604 (LPLPLLVERE…YLLQSWPDPR (207 aa)). The residue at position 575 (Ser575) is a Phosphoserine. 2 disordered regions span residues 608–651 (QSPD…SNRY) and 674–696 (DYDH…PRVT). Residues Ser681 and Ser683 each carry the phosphoserine modification.

Palmitoylated. Probably palmitoylated by ZDHHC3 and ZDHHC7. In terms of tissue distribution, expressed in trophoblast cells of placental villi.

GTPase activator for the Rho-type GTPases. As a GCM1 downstream effector, it is involved in placental development and positively regulates trophoblast cells migration. It regulates cytoskeletal remodeling by controlling the activity of Rho GTPases including RHOA, CDC42 and RAC1. In Homo sapiens (Human), this protein is Rho GTPase-activating protein SYDE1 (SYDE1).